A 451-amino-acid chain; its full sequence is Exodeoxyribonuclease 7 large subunit (451 aa).

Belongs to the XseA family. Heterooligomer composed of large and small subunits.

The protein resides in the cytoplasm. The catalysed reaction is Exonucleolytic cleavage in either 5'- to 3'- or 3'- to 5'-direction to yield nucleoside 5'-phosphates.. Functionally, bidirectionally degrades single-stranded DNA into large acid-insoluble oligonucleotides, which are then degraded further into small acid-soluble oligonucleotides. This chain is Exodeoxyribonuclease 7 large subunit, found in Neisseria gonorrhoeae (strain ATCC 700825 / FA 1090).